We begin with the raw amino-acid sequence, 3969 residues long: Histone-lysine N-methyltransferase 2A (3969 aa).

Disordered regions lie at residues 1 to 108, 132 to 253, and 301 to 352; these read MAHS…LLRV, VFGE…EDSL, and RRRG…RQSP. The short motif at 6–25 is the Menin-binding motif (MBM) element; that stretch reads RWRFPARPGTTGGGGGGGRR. The segment covering 15–29 has biased composition (gly residues); sequence TTGGGGGGGRRGLGG. Low complexity-rich tracts occupy residues 59-69 and 77-104; these read AVAAAAAAAGS and GAAA…SGPA. Positions 123-134 match the Integrase domain-binding motif 1 (IBM1) motif; sequence GTNLRRFRAVFG. Phosphoserine; by CK2 is present on residues serine 136 and serine 142. The short motif at 147 to 152 is the Integrase domain-binding motif 2 (IBM2) element; sequence QFLGFG. The residue at position 153 (serine 153) is a Phosphoserine. Residues 169–180 constitute a DNA-binding region (a.T hook 1); the sequence is KTSPRKPRGRPR. Residue serine 197 is modified to Phosphoserine. Basic and acidic residues-rich tracts occupy residues 202 to 220 and 237 to 253; these read SETK…SIEK and HGKD…EDSL. A DNA-binding region (a.T hook 2) is located at residues 217–227; it reads SIEKKRGRPPT. Lysine 239 carries the post-translational modification N6-acetyllysine. The segment at residues 301–309 is a DNA-binding region (a.T hook 3); the sequence is RRRGRPPST. Residues 323-347 are compositionally biased toward basic and acidic residues; that stretch reads ELEKPQKVRKDKEGTPPLTKEDKTV. An N6-acetyllysine modification is found at lysine 373. Residues 445–585 are disordered; the sequence is STPNSRFSAP…SSISDHTPWL (141 aa). The segment covering 452–491 has biased composition (low complexity); the sequence is SAPSCGSSEKSSAASQHSSQMSSDSSRSSSPSVDTSTDSQ. The residue at position 518 (serine 518) is a Phosphoserine. Residues 546 to 559 are compositionally biased toward low complexity; it reads LSTLQSAPQQQTSS. Residues 560 to 573 show a composition bias toward pro residues; it reads SPPPPLLTPPPPLQ. N6-acetyllysine is present on lysine 636. Serine 680 carries the post-translational modification Phosphoserine. Disordered stretches follow at residues 713–780, 798–949, 1038–1066, and 1106–1166; these read ESVT…SSSL, FPSH…TSVT, EKSK…VRGP, and SSMG…VPED. Residues 716–732 are compositionally biased toward polar residues; it reads TLPSNRTSAGTSSSGVS. The segment covering 762-780 has biased composition (low complexity); sequence LSSSELSPLTPPSSVSSSL. Residues 798 to 808 are compositionally biased toward polar residues; sequence FPSHSLTQSGE. Residues 820 to 841 show a composition bias toward low complexity; it reads TSAPAEPFSSSSPTPLFPWFTP. Residue threonine 840 is modified to Phosphothreonine. Positions 846–890 are enriched in basic and acidic residues; the sequence is ERGRNKDKAPEELSKDRDADKSVEKDKSRERDREREKENKRESRK. Serine 926 and serine 1056 each carry phosphoserine. The segment covering 1043-1062 has biased composition (polar residues); that stretch reads LKQTDQPKAQGQESDSSETS. Lysine 1130 is modified (N6-acetyllysine). Residues 1147 to 1195 form a CXXC-type zinc finger; the sequence is KKGRRSRRCGQCPGCQVPEDCGVCTNCLDKPKFGGRNIKKQCCKMRKCQ. Zn(2+)-binding residues include cysteine 1155, cysteine 1158, cysteine 1161, cysteine 1167, cysteine 1170, cysteine 1173, cysteine 1189, and cysteine 1194. Residues 1200–1375 form a disordered region; that stretch reads MPSKAYLQKQ…PPVNKQENAG (176 aa). Over residues 1220–1232 the composition is skewed to basic and acidic residues; sequence SKTSEKKDSKESS. The span at 1233–1243 shows a compositional bias: low complexity; that stretch reads VVKNVVDSSQK. At lysine 1235 the chain carries N6-acetyllysine. Over residues 1248–1273 the composition is skewed to basic and acidic residues; the sequence is AREDPAPKKSSSEPPPRKPVEEKSEE. Residues 1284–1300 show a composition bias toward polar residues; the sequence is KQATTPASRKSSKQVSQ. Residues 1304–1313 are compositionally biased toward pro residues; it reads VIPPQPPTTG. 3 consecutive PHD-type zinc fingers follow at residues 1431-1482, 1479-1533, and 1566-1627; these read RVVC…CKFC, CKFC…CVRC, and GNFC…CTER. The interval 1584 to 1600 is interaction with histone H3K4me3; it reads KMMQCGKCDRWVHSKCE. The Bromo domain occupies 1635–1765; sequence ALEKELQISL…SFFIRQMERV (131 aa). Disordered regions lie at residues 1663–1713 and 1806–1869; these read YRQA…GVKR and QERE…GIED. Residues 1826 to 1847 are compositionally biased toward pro residues; the sequence is APKPKGPGEPDSPTPLHPPTPP. The residue at position 1837 (serine 1837) is a Phosphoserine. Residue threonine 1845 is modified to Phosphothreonine. Serine 1858 carries the phosphoserine modification. A C2HC pre-PHD-type zinc finger spans residues 1870–1910; the sequence is NRQCALCLTYGDDSANDAGRLLYIGQNEWTHVNCALWSAEV. The PHD-type 4 zinc-finger motif lies at 1931–1978; sequence LRCEFCQKPGATVGCCLTSCTSNYHFMCSRAKNCVFLDDKKVYCQRHR. The 57-residue stretch at 2018 to 2074 folds into the FYR N-terminal domain; the sequence is NIHMMIGSMTIDCLGILNDLSDCEDKLFPIGYQCSRVYWSTTDARKRCVYTCKIVEC. 7 disordered regions span residues 2081–2133, 2145–2232, 2275–2333, 2373–2460, 2475–2618, 2647–2675, and 2713–2821; these read PDIN…TSGS, IRTP…TTGT, NKNS…KLAP, RGQR…EGNL, GQRP…RYPR, FYSS…STSD, and KISQ…KNLL. Positions 2095 to 2115 are enriched in polar residues; sequence IAHSPTSFTESSSKESQNTAE. Serine 2098 bears the Phosphoserine mark. Threonine 2147 is modified (phosphothreonine). A phosphoserine mark is found at serine 2151 and serine 2201. Residues 2214–2232 are compositionally biased toward polar residues; that stretch reads RTGNTYSRNNVSSVSTTGT. The segment covering 2283–2302 has biased composition (low complexity); it reads SSSSEMKQSSASDLVSKSSS. Polar residues-rich tracts occupy residues 2310–2319 and 2406–2421; these read VLSSKSSEGS and GMSN…MGSS. Positions 2432–2442 are enriched in basic and acidic residues; sequence SCKETFKEKHS. The residue at position 2525 (threonine 2525) is a Phosphothreonine. A Glycyl lysine isopeptide (Lys-Gly) (interchain with G-Cter in SUMO2) cross-link involves residue lysine 2528. Composition is skewed to polar residues over residues 2543–2563 and 2573–2592; these read SPAS…SASE and PSPN…QNLP. Position 2611 is a phosphoserine (serine 2611). The segment covering 2726–2741 has biased composition (polar residues); the sequence is SDTSVTATTRKSSQIP. A compositionally biased stretch (basic and acidic residues) spans 2744–2782; that stretch reads NGKENGTENLKIDRPEDAGEKEHVTKSSVGHKNEPKMDN. Polar residues predominate over residues 2784–2795; the sequence is HSVSRVKTQGQD. Serine 2796 carries the phosphoserine modification. Residues 2796-2805 are compositionally biased toward low complexity; it reads SLEAQLSSLE. The span at 2812–2821 shows a compositional bias: polar residues; sequence TSTPSDKNLL. The 9aaTAD motif lies at 2847–2855; that stretch reads SDIMDFVLK. Phosphoserine is present on serine 2955. An N6-acetyllysine modification is found at lysine 2958. Disordered stretches follow at residues 2961-3064 and 3166-3244; these read TITE…NAAV and PAAT…SNIA. Polar residues-rich tracts occupy residues 2963–2972 and 3016–3030; these read TEKSVASSES and HGNN…STPG. Serine 3036 carries the phosphoserine modification. A compositionally biased stretch (polar residues) spans 3039–3064; the sequence is VPIQNQKYVPNSTDSPGPSQISNAAV. A compositionally biased stretch (low complexity) spans 3171 to 3182; that stretch reads SSFPPNISNPPS. Polar residues predominate over residues 3198-3216; it reads VSESSQRTDLSTTVATPSS. Residues 3218–3233 show a composition bias toward basic residues; it reads LKKRPISRLQTRKNKK. At threonine 3372 the chain carries Phosphothreonine. Lysine 3462 bears the N6-acetyllysine mark. 2 disordered regions span residues 3464-3608 and 3620-3643; these read GIHS…GQPA and TQNP…SNFS. Positions 3476–3489 are enriched in polar residues; it reads SGPQVSNFTQTVDA. Residues 3508 to 3529 are compositionally biased toward low complexity; the sequence is SPTSPGGSPSSPSSGQRSASPS. A phosphoserine mark is found at serine 3511, serine 3515, and serine 3527. Over residues 3591 to 3603 the composition is skewed to polar residues; that stretch reads QDTASVEQSSQKE. Residues 3666 to 3747 form the FYR C-terminal domain; the sequence is KKGLVFEISS…KHCRNYKFRF (82 aa). Positions 3762-3767 match the WDR5 interaction motif (WIN) motif; it reads GSARAE. The interval 3785–3808 is disordered; sequence HRQPPEYNPNDEEEEEVQLKSARR. The region spanning 3829–3945 is the SET domain; the sequence is EAVGVYRSPI…RGEELTYDYK (117 aa). Residues histidine 3839 and arginine 3841 each coordinate S-adenosyl-L-methionine. Cysteine 3882 carries the S-methylcysteine; by autocatalysis modification. Residues tyrosine 3883 and 3906–3907 contribute to the S-adenosyl-L-methionine site; that span reads NH. Residues cysteine 3909 and cysteine 3957 each coordinate Zn(2+). Residues 3953–3969 enclose the Post-SET domain; that stretch reads NKLPCNCGAKKCRKFLN. Asparagine 3958 contributes to the S-adenosyl-L-methionine binding site. Zn(2+) contacts are provided by cysteine 3959 and cysteine 3964.

It belongs to the class V-like SAM-binding methyltransferase superfamily. Histone-lysine methyltransferase family. TRX/MLL subfamily. MLL cleavage product N320 heterodimerizes with MLL cleavage product C180 (via SET and FYRC domains). Component of some MLL1/MLL complex, at least composed of the core components KMT2A/MLL1, ASH2L, HCFC1/HCF1, HCFC2, WDR5, DPY30 and RBBP5, as well as the facultative components BACC1, CHD8, E2F6, HSP70, INO80C, KANSL1, LAS1L, MAX, MCRS1, MEN1, MGA, KAT8/MOF, PELP1, PHF20, PRP31, RING2, RUVB1/TIP49A, RUVB2/TIP49B, SENP3, TAF1, TAF4, TAF6, TAF7, TAF9 and TEX10. Forms a core complex with the evolutionary conserved subcomplex WRAD composed of WDR5, RBBP5, ASH2L/ASH2 and DPY30 subunits; WRAD differentially stimulates the methyltransferase activity. Interacts (via WIN motif) with WDR5; the interaction is direct. Interaction with WDR5 is required for stable interaction with ASH2L and RBBP5, and thereby also for optimal histone methyltransferase activity. Interacts with KAT8/MOF; the interaction is direct. Interacts with SBF1 and PPP1R15A. Interacts with ZNF335. Interacts with CLOCK and BMAL1 in a circadian manner. Interacts with PPIE; this results in decreased histone H3 methyltransferase activity. Interacts with CREBBP. Interacts with the WRAD complex composed of WDR5, RBBP5, ASH2L and DPY30. Interacts (via MBM motif) with MEN1. Interacts (via IBM motifs) with PSIP1 (via IBD domain) with moderate affinity whereas the KMT2A-MEN1 complex interacts with a greater affinity; MEN1 enhances interaction of KMT2A with PSIP1. Phosphorylation increases its affinity for PSIP1. Forms a complex with CREBBP and CREB1. As to quaternary structure, (Microbial infection) Interacts with herpes virus 8/HHV-8 protein LANA1; this interaction regulates the MLL1 histone methyltransferase activity on viral DNA. Post-translationally, proteolytic cleavage by TASP1 generates MLL cleavage product N320 and MLL cleavage product C180, which reassemble through a non-covalent association. 2 cleavage sites exist, cleavage site 1 (CS1) and cleavage site 2 (CS2), to generate MLL cleavage products N320 and C180. CS2 is the major site. In terms of processing, phosphorylation increases its interaction with PSIP1. Auto-methylated at Cys-3882: auto-methylation is inhibited by the WRAD complex and unmodified histone H3. In terms of tissue distribution, heart, lung, brain and T- and B-lymphocytes.

It localises to the nucleus. The enzyme catalyses L-lysyl(4)-[histone H3] + S-adenosyl-L-methionine = N(6)-methyl-L-lysyl(4)-[histone H3] + S-adenosyl-L-homocysteine + H(+). It carries out the reaction N(6)-methyl-L-lysyl(4)-[histone H3] + S-adenosyl-L-methionine = N(6),N(6)-dimethyl-L-lysyl(4)-[histone H3] + S-adenosyl-L-homocysteine + H(+). It catalyses the reaction L-cysteinyl-[protein] + S-adenosyl-L-methionine = S-methyl-L-cysteinyl-[protein] + S-adenosyl-L-homocysteine + H(+). In terms of biological role, histone methyltransferase that plays an essential role in early development and hematopoiesis. Catalytic subunit of the MLL1/MLL complex, a multiprotein complex that mediates both methylation of 'Lys-4' of histone H3 (H3K4me) complex and acetylation of 'Lys-16' of histone H4 (H4K16ac). Catalyzes methyl group transfer from S-adenosyl-L-methionine to the epsilon-amino group of 'Lys-4' of histone H3 (H3K4) via a non-processive mechanism. Part of chromatin remodeling machinery predominantly forms H3K4me1 and H3K4me2 methylation marks at active chromatin sites where transcription and DNA repair take place. Has weak methyltransferase activity by itself, and requires other component of the MLL1/MLL complex to obtain full methyltransferase activity. Has no activity toward histone H3 phosphorylated on 'Thr-3', less activity toward H3 dimethylated on 'Arg-8' or 'Lys-9', while it has higher activity toward H3 acetylated on 'Lys-9'. Binds to unmethylated CpG elements in the promoter of target genes and helps maintain them in the nonmethylated state. Required for transcriptional activation of HOXA9. Promotes PPP1R15A-induced apoptosis. Plays a critical role in the control of circadian gene expression and is essential for the transcriptional activation mediated by the CLOCK-BMAL1 heterodimer. Establishes a permissive chromatin state for circadian transcription by mediating a rhythmic methylation of 'Lys-4' of histone H3 (H3K4me) and this histone modification directs the circadian acetylation at H3K9 and H3K14 allowing the recruitment of CLOCK-BMAL1 to chromatin. Also has auto-methylation activity on Cys-3882 in absence of histone H3 substrate. The chain is Histone-lysine N-methyltransferase 2A (KMT2A) from Homo sapiens (Human).